Here is a 305-residue protein sequence, read N- to C-terminus: tRNA-cytidine(32) 2-sulfurtransferase (305 aa).

A disordered region spans residues 1–20 (MTAVLPLPQPLADPAPRDPR). The PP-loop motif signature appears at 59–64 (SGGKDS). [4Fe-4S] cluster-binding residues include Cys-134, Cys-137, and Cys-225. The span at 282–293 (DAPSDVDPDPSA) shows a compositional bias: low complexity. The disordered stretch occupies residues 282–305 (DAPSDVDPDPSAWLSASHAPHDSD).

The protein belongs to the TtcA family. In terms of assembly, homodimer. Requires Mg(2+) as cofactor. [4Fe-4S] cluster is required as a cofactor.

The protein resides in the cytoplasm. It carries out the reaction cytidine(32) in tRNA + S-sulfanyl-L-cysteinyl-[cysteine desulfurase] + AH2 + ATP = 2-thiocytidine(32) in tRNA + L-cysteinyl-[cysteine desulfurase] + A + AMP + diphosphate + H(+). It participates in tRNA modification. In terms of biological role, catalyzes the ATP-dependent 2-thiolation of cytidine in position 32 of tRNA, to form 2-thiocytidine (s(2)C32). The sulfur atoms are provided by the cysteine/cysteine desulfurase (IscS) system. This chain is tRNA-cytidine(32) 2-sulfurtransferase, found in Xanthomonas euvesicatoria pv. vesicatoria (strain 85-10) (Xanthomonas campestris pv. vesicatoria).